The chain runs to 170 residues: 6,7-dimethyl-8-ribityllumazine synthase 2 (170 aa).

5-amino-6-(D-ribitylamino)uracil is bound by residues W25, 59–61, and 83–85; these read AFE and LVV. R91 acts as the Proton donor in catalysis. S116 lines the 5-amino-6-(D-ribitylamino)uracil pocket. H130 provides a ligand contact to (2S)-2-hydroxy-3-oxobutyl phosphate.

It belongs to the DMRL synthase family. In terms of assembly, forms an icosahedral capsid composed of 60 subunits, arranged as a dodecamer of pentamers.

It catalyses the reaction (2S)-2-hydroxy-3-oxobutyl phosphate + 5-amino-6-(D-ribitylamino)uracil = 6,7-dimethyl-8-(1-D-ribityl)lumazine + phosphate + 2 H2O + H(+). The protein operates within cofactor biosynthesis; riboflavin biosynthesis; riboflavin from 2-hydroxy-3-oxobutyl phosphate and 5-amino-6-(D-ribitylamino)uracil: step 1/2. In terms of biological role, catalyzes the formation of 6,7-dimethyl-8-ribityllumazine by condensation of 5-amino-6-(D-ribitylamino)uracil with 3,4-dihydroxy-2-butanone 4-phosphate. This is the penultimate step in the biosynthesis of riboflavin. The chain is 6,7-dimethyl-8-ribityllumazine synthase 2 from Pseudomonas syringae pv. tomato (strain ATCC BAA-871 / DC3000).